Here is a 277-residue protein sequence, read N- to C-terminus: 3-methyl-2-oxobutanoate hydroxymethyltransferase (277 aa).

Positions 43 and 82 each coordinate Mg(2+). Residues 43–44, D82, and K112 each bind 3-methyl-2-oxobutanoate; that span reads DS. Residue E114 coordinates Mg(2+). The Proton acceptor role is filled by E181.

It belongs to the PanB family. Homodecamer; pentamer of dimers. Mg(2+) is required as a cofactor.

The protein localises to the cytoplasm. It carries out the reaction 3-methyl-2-oxobutanoate + (6R)-5,10-methylene-5,6,7,8-tetrahydrofolate + H2O = 2-dehydropantoate + (6S)-5,6,7,8-tetrahydrofolate. It participates in cofactor biosynthesis; (R)-pantothenate biosynthesis; (R)-pantoate from 3-methyl-2-oxobutanoate: step 1/2. In terms of biological role, catalyzes the reversible reaction in which hydroxymethyl group from 5,10-methylenetetrahydrofolate is transferred onto alpha-ketoisovalerate to form ketopantoate. The protein is 3-methyl-2-oxobutanoate hydroxymethyltransferase of Listeria monocytogenes serotype 4b (strain CLIP80459).